The sequence spans 133 residues: Ribosome-binding factor A (133 aa).

It belongs to the RbfA family. As to quaternary structure, monomer. Binds 30S ribosomal subunits, but not 50S ribosomal subunits or 70S ribosomes.

The protein localises to the cytoplasm. Functionally, one of several proteins that assist in the late maturation steps of the functional core of the 30S ribosomal subunit. Associates with free 30S ribosomal subunits (but not with 30S subunits that are part of 70S ribosomes or polysomes). Required for efficient processing of 16S rRNA. May interact with the 5'-terminal helix region of 16S rRNA. The sequence is that of Ribosome-binding factor A from Cytophaga hutchinsonii (strain ATCC 33406 / DSM 1761 / CIP 103989 / NBRC 15051 / NCIMB 9469 / D465).